The following is a 106-amino-acid chain: MLLTTTNTIEGKEITQYFGIVSGETIIGANVFKDFFAGIRDIVGGRAGSYESVLREAKETALKEMSDHAARMGANAVIAVDLDYETVGGSGSMLMVTAAGTAVRYQ.

Belongs to the UPF0145 family.

This chain is UPF0145 protein BDI_2732, found in Parabacteroides distasonis (strain ATCC 8503 / DSM 20701 / CIP 104284 / JCM 5825 / NCTC 11152).